The chain runs to 353 residues: Phospho-N-acetylmuramoyl-pentapeptide-transferase (353 aa).

The next 10 helical transmembrane spans lie at 22–42 (FAFFIALCLSLFLMPKFITWA), 65–85 (TPTMGGLIFISSAVIASLFCI), 88–108 (DNIFAISALLCLILFCLIGLI), 129–149 (LLAQIIAGLICILPLYFSSEL), 161–181 (PLFDMEIFAIAFWILVLISSS), 192–212 (GLATVPSIFSLSTLGIFLYLS), 228–248 (GLGEVVIICAALIGALMGFLW), 256–276 (VFMGDSGSLALGGFIGFLAII), 281–301 (ILLLLIGFVFVLETVSVILQV), and 330–350 (KIIVRFWMIALLSNLLALASI).

It belongs to the glycosyltransferase 4 family. MraY subfamily. The cofactor is Mg(2+).

The protein resides in the cell inner membrane. It catalyses the reaction UDP-N-acetyl-alpha-D-muramoyl-L-alanyl-gamma-D-glutamyl-meso-2,6-diaminopimeloyl-D-alanyl-D-alanine + di-trans,octa-cis-undecaprenyl phosphate = di-trans,octa-cis-undecaprenyl diphospho-N-acetyl-alpha-D-muramoyl-L-alanyl-D-glutamyl-meso-2,6-diaminopimeloyl-D-alanyl-D-alanine + UMP. Its pathway is cell wall biogenesis; peptidoglycan biosynthesis. Functionally, catalyzes the initial step of the lipid cycle reactions in the biosynthesis of the cell wall peptidoglycan: transfers peptidoglycan precursor phospho-MurNAc-pentapeptide from UDP-MurNAc-pentapeptide onto the lipid carrier undecaprenyl phosphate, yielding undecaprenyl-pyrophosphoryl-MurNAc-pentapeptide, known as lipid I. The chain is Phospho-N-acetylmuramoyl-pentapeptide-transferase from Campylobacter jejuni (strain RM1221).